The primary structure comprises 1376 residues: DNA-directed RNA polymerase subunit beta (1376 aa).

Belongs to the RNA polymerase beta chain family. The RNAP catalytic core consists of 2 alpha, 1 beta, 1 beta' and 1 omega subunit. When a sigma factor is associated with the core the holoenzyme is formed, which can initiate transcription.

It carries out the reaction RNA(n) + a ribonucleoside 5'-triphosphate = RNA(n+1) + diphosphate. DNA-dependent RNA polymerase catalyzes the transcription of DNA into RNA using the four ribonucleoside triphosphates as substrates. This Methylorubrum extorquens (strain PA1) (Methylobacterium extorquens) protein is DNA-directed RNA polymerase subunit beta.